We begin with the raw amino-acid sequence, 176 residues long: MSKTVEPACLVPVGKVTRTHGIRGALKIFPYGESLAAQAAGERFFLRSKNGGYCTLTLIGLRAQGRMLVCGFEEIKDVNGAQPFVGEEIFLPEDRLPPVSEGEYYHYRLIGLDIVTLDGESLGVLRKIIETGGNDVYVAEREGREILIPAIEDVIREIDLERKRMVVDLPEGLVDA.

In terms of domain architecture, PRC barrel spans 101–173 (EGEYYHYRLI…RMVVDLPEGL (73 aa)).

It belongs to the RimM family. As to quaternary structure, binds ribosomal protein uS19.

Its subcellular location is the cytoplasm. Its function is as follows. An accessory protein needed during the final step in the assembly of 30S ribosomal subunit, possibly for assembly of the head region. Essential for efficient processing of 16S rRNA. May be needed both before and after RbfA during the maturation of 16S rRNA. It has affinity for free ribosomal 30S subunits but not for 70S ribosomes. The chain is Ribosome maturation factor RimM from Syntrophobacter fumaroxidans (strain DSM 10017 / MPOB).